The primary structure comprises 2320 residues: Bromodomain and WD repeat-containing protein 1 (2320 aa).

8 WD repeats span residues Gly184–Thr223, Gly226–Val265, Gly268–Ser311, Arg322–Glu365, Ser366–Ile405, Phe424–Asn463, Gly466–His506, and Gln514–Lys553. The interval Gln668–Gly691 is disordered. At Thr687 the chain carries Phosphothreonine. Ser696, Ser701, and Ser710 each carry phosphoserine. Disordered regions lie at residues Asn809–Asp867 and Ser895–Arg925. Low complexity-rich tracts occupy residues Glu814–Ser824 and Tyr854–Asp867. Residues Pro907–Lys918 show a composition bias toward basic residues. Residues Trp1157–Gln1264 form the Bromo 1 domain. The disordered stretch occupies residues Glu1271–Gly1304. Over residues Glu1277–Ser1289 the composition is skewed to acidic residues. Ser1289 is subject to Phosphoserine. In terms of domain architecture, Bromo 2 spans Tyr1313–Ile1418. Residues Arg1434–Cys1593 form a disordered region. Residues Asn1443 to Ile1454 are compositionally biased toward polar residues. Basic residues predominate over residues Arg1455–Ser1464. Ser1475 bears the Phosphoserine mark. The segment covering Ser1475–Ile1496 has biased composition (polar residues). Residue Thr1477 is modified to Phosphothreonine. Ser1479 carries the phosphoserine modification. Residues Ser1497–Ala1509 show a composition bias toward low complexity. The segment covering Pro1520–Glu1529 has biased composition (polar residues). Over residues Ser1535 to Ser1548 the composition is skewed to low complexity. The span at Glu1549–Ser1561 shows a compositional bias: basic and acidic residues. Ser1605, Ser1607, Ser1678, Ser1683, and Ser1686 each carry phosphoserine. 3 disordered regions span residues Ala1670–Thr1805, Lys1817–Lys1839, and Asp1862–Arg1899. The segment covering His1676–Glu1687 has biased composition (basic and acidic residues). The segment covering Pro1701 to Val1712 has biased composition (polar residues). Basic and acidic residues-rich tracts occupy residues Ser1715–Val1728 and Leu1751–Cys1769. Ser1755, Ser1756, Ser1786, Ser1788, Ser1793, and Ser1820 each carry phosphoserine. Over residues Asp1821 to Arg1832 the composition is skewed to acidic residues. Thr1867 bears the Phosphothreonine mark. 6 positions are modified to phosphoserine: Ser1871, Ser1904, Ser1905, Ser1907, Ser1910, and Ser1943. Position 1955 is a phosphothreonine (Thr1955). Disordered regions lie at residues Leu2014–Gln2077 and Thr2112–Lys2184. A phosphoserine mark is found at Ser2018, Ser2020, and Ser2052. Composition is skewed to basic and acidic residues over residues Glu2054 to Phe2069 and Val2114 to Lys2139. A compositionally biased stretch (polar residues) spans Ile2140–Glu2165. Thr2164 is subject to Phosphothreonine. 2 positions are modified to phosphoserine: Ser2166 and Val2214.

In terms of assembly, interacts with SMARCA4. As to expression, ubiquitously expressed. Expressed in respiratory epithelial cells and testis spermatozoa.

It is found in the cytoplasm. The protein localises to the nucleus. It localises to the cell projection. The protein resides in the cilium membrane. Its subcellular location is the cytoskeleton. It is found in the flagellum axoneme. In terms of biological role, may be a transcriptional activator. May be involved in chromatin remodeling. Plays a role in the regulation of cell morphology and cytoskeletal organization. Required in the control of cell shape. The polypeptide is Bromodomain and WD repeat-containing protein 1 (BRWD1) (Homo sapiens (Human)).